A 421-amino-acid chain; its full sequence is UDP-N-acetylglucosamine 1-carboxyvinyltransferase (421 aa).

22 to 23 is a phosphoenolpyruvate binding site; it reads KN. Arginine 93 contacts UDP-N-acetyl-alpha-D-glucosamine. The active-site Proton donor is cysteine 117. Cysteine 117 is modified (2-(S-cysteinyl)pyruvic acid O-phosphothioketal). UDP-N-acetyl-alpha-D-glucosamine contacts are provided by residues 122-126, aspartate 308, and leucine 330; that span reads RPVDL.

This sequence belongs to the EPSP synthase family. MurA subfamily.

Its subcellular location is the cytoplasm. It carries out the reaction phosphoenolpyruvate + UDP-N-acetyl-alpha-D-glucosamine = UDP-N-acetyl-3-O-(1-carboxyvinyl)-alpha-D-glucosamine + phosphate. It participates in cell wall biogenesis; peptidoglycan biosynthesis. Functionally, cell wall formation. Adds enolpyruvyl to UDP-N-acetylglucosamine. The chain is UDP-N-acetylglucosamine 1-carboxyvinyltransferase from Wolinella succinogenes (strain ATCC 29543 / DSM 1740 / CCUG 13145 / JCM 31913 / LMG 7466 / NCTC 11488 / FDC 602W) (Vibrio succinogenes).